We begin with the raw amino-acid sequence, 399 residues long: uncharacterized protein (399 aa).

A run of 9 helical transmembrane segments spans residues 46 to 66 (IAPYLITLTGTITILLSFFIV), 76 to 95 (TLPRWVYAMSGLTLFFYQTM), 139 to 159 (GVGYISLIQLFITALLPFWMA), 181 to 201 (IIIIVCALLSTAIFGNAFWTF), 226 to 246 (LMLNEIIVASLSLPCLITCFF), 262 to 282 (ILPALKHILVWVIITVSSFIW), 303 to 323 (VQFSIGIIFGELVSRLILAHM), 330 to 350 (IIQAPLYPLILSTFCSTINYF), and 352 to 372 (GTIIIPENLLLILFTVTSFVH).

This sequence belongs to the CDP-alcohol phosphatidyltransferase class-I family.

The protein resides in the membrane. This is an uncharacterized protein from Dictyostelium discoideum (Social amoeba).